Consider the following 139-residue polypeptide: MSRILAIDYGKKRTGVAVTDVLQIIANGLTTVPTHQLLDFILKYVEKEPVERIIVGHPKQMNNQESENMRNIVPFVNQLRKKIPDIPVEFVDERFTSVLAHQAMLDGGLKKKDRQNKALVDEISATIILQSYLESKKYI.

Belongs to the YqgF nuclease family.

It is found in the cytoplasm. Its function is as follows. Could be a nuclease involved in processing of the 5'-end of pre-16S rRNA. The polypeptide is Putative pre-16S rRNA nuclease (Phocaeicola vulgatus (strain ATCC 8482 / DSM 1447 / JCM 5826 / CCUG 4940 / NBRC 14291 / NCTC 11154) (Bacteroides vulgatus)).